Here is a 153-residue protein sequence, read N- to C-terminus: Aspartate carbamoyltransferase regulatory chain (153 aa).

The Zn(2+) site is built by cysteine 109, cysteine 114, cysteine 138, and cysteine 141.

It belongs to the PyrI family. In terms of assembly, contains catalytic and regulatory chains. Requires Zn(2+) as cofactor.

In terms of biological role, involved in allosteric regulation of aspartate carbamoyltransferase. This is Aspartate carbamoyltransferase regulatory chain from Escherichia coli (strain ATCC 8739 / DSM 1576 / NBRC 3972 / NCIMB 8545 / WDCM 00012 / Crooks).